Here is a 117-residue protein sequence, read N- to C-terminus: Biofilm growth-associated repressor (117 aa).

Residues 20–114 (AMEKRATEVA…ALYAIFCAPE (95 aa)) form the HTH arsR-type domain. The H-T-H motif DNA-binding region spans 54–77 (VGELEAKLDIRQPTLSQQLGVLRE).

In terms of biological role, represses an operon that comprises at least itself and blh. Binds to a palindromic AT-rich sequence spanning the -10 region of the blh promoter and blocks transcription of the operon. The protein is Biofilm growth-associated repressor (bigR) of Agrobacterium fabrum (strain C58 / ATCC 33970) (Agrobacterium tumefaciens (strain C58)).